The sequence spans 696 residues: MSQFVLEIGTEELPARFLPALERELAERFTRALADAGIECDPVCVMSTPRRAVVRMDAVNPVQSESEEVVTGPPARIAFTPEGGLTKAAEGFARTQGVEVADIFRLTTDKGEYIAVRKHMGGARSIDLLRDICPAIIGALPFPKRMRWGSGDFTYARPMRWLLALFDESVVDFEVGGVRSGNITYGHRIHGAGPLTVAHAGDYERVIREQGGVTPVGEERRNAVVTGGNTLATAAGGKVIWKDSLLDEVQGLVEHPVPCLGNIDPSFLELPREVLLTSMESHQKSFGVEDAEGRLMPHFLTVLNLTPLDGDLVRKGWERVLRARLEDARFFWKTDLASSFDAWLASLDNVIFLGPLGSMGDKTRRLEQLCAWLASEVGFDDATAAARAGRLSKGDLVSGMVGEFDTLQGIMGGIYARRMGEAEAVAAAIAEQYLPAGPDSPVPSSMCGALLSIADKADTLAGCFGLGMIPTGAADPYALRRCVLGIARIILEHGLQLDVRGLFAKAFALYGERAWKLAPEDALVKLDEFFMARLRNLFIANGYETLLVEAVLAAGCDDVRSAGARLEALAAFSRRDDFASAVLTFKRAANIIRKQGGDSDVALDGAWKADLLVEDAERHLAASLEAMFPRFDGLWAEGDYPALFGLLGELRPVVDGFFEGVMVMSDDAALRTNRLNLLQALVGRLSRLADFGALQM.

It belongs to the class-II aminoacyl-tRNA synthetase family. As to quaternary structure, tetramer of two alpha and two beta subunits.

It is found in the cytoplasm. The enzyme catalyses tRNA(Gly) + glycine + ATP = glycyl-tRNA(Gly) + AMP + diphosphate. This chain is Glycine--tRNA ligase beta subunit, found in Nitratidesulfovibrio vulgaris (strain DP4) (Desulfovibrio vulgaris).